Here is a 1178-residue protein sequence, read N- to C-terminus: Pyruvate carboxylase, mitochondrial (1178 aa).

Residues 1-20 (MLKFQTVRGGLRLLGVRRSS) constitute a mitochondrion transit peptide. N6-acetyllysine occurs at positions 35 and 39. The region spanning 36 to 486 (PIKKVMVANR…DTQFIDENPE (451 aa)) is the Biotin carboxylation domain. Residue Lys-79 is modified to N6-acetyllysine; alternate. Lys-79 is subject to N6-succinyllysine; alternate. N6-acetyllysine is present on residues Lys-148 and Lys-152. ATP contacts are provided by Lys-152 and Glu-236. Residues 156-353 (RAIAIAAGVP…LVHAQIHVSE (198 aa)) form the ATP-grasp domain. Lys-241 carries the N6-acetyllysine modification. Position 271 (His-271) interacts with ATP. 3 positions are modified to N6-acetyllysine: Lys-297, Lys-316, and Lys-319. Residue Arg-328 is part of the active site. Lys-434 bears the N6-acetyllysine mark. At Lys-442 the chain carries N6-succinyllysine. The region spanning 563-832 (LLLMDTTFRD…DTEVPLERVF (270 aa)) is the Pyruvate carboxyltransferase domain. 571–575 (RDAHQ) provides a ligand contact to substrate. Residue Asp-572 coordinates Mn(2+). Lys-589 is subject to N6-acetyllysine. Residue Arg-644 coordinates substrate. N6-acetyllysine is present on residues Lys-661 and Lys-717. Lys-741 contacts Mn(2+). Lys-741 carries the post-translational modification N6-carboxylysine. The residue at position 748 (Lys-748) is an N6-acetyllysine. The Mn(2+) site is built by His-771 and His-773. Residue Lys-892 is modified to N6-acetyllysine. Thr-908 provides a ligand contact to substrate. Lys-969 carries the N6-acetyllysine modification. An N6-acetyllysine; alternate modification is found at Lys-988. At Lys-988 the chain carries N6-succinyllysine; alternate. An N6-acetyllysine modification is found at Lys-992. Position 1003 is a phosphothreonine (Thr-1003). 3 positions are modified to N6-acetyllysine: Lys-1061, Lys-1090, and Lys-1124. One can recognise a Biotinyl-binding domain in the interval 1109 to 1178 (KGQIGAPMPG…EGDDLILEIE (70 aa)). Lys-1144 carries the N6-biotinyllysine modification.

As to quaternary structure, homotetramer. Interacts (via the biotin carboxylation domain) with SIRT4. Biotin serves as cofactor. Requires Mn(2+) as cofactor. Post-translationally, acetylation of Lys-748 might play a role in catalytic activity regulation.

The protein resides in the mitochondrion matrix. It catalyses the reaction hydrogencarbonate + pyruvate + ATP = oxaloacetate + ADP + phosphate + H(+). It functions in the pathway carbohydrate biosynthesis; gluconeogenesis. Pyruvate carboxylase catalyzes a 2-step reaction, involving the ATP-dependent carboxylation of the covalently attached biotin in the first step and the transfer of the carboxyl group to pyruvate in the second. Catalyzes in a tissue specific manner, the initial reactions of glucose (liver, kidney) and lipid (adipose tissue, liver, brain) synthesis from pyruvate. This Rattus norvegicus (Rat) protein is Pyruvate carboxylase, mitochondrial (Pc).